Here is a 234-residue protein sequence, read N- to C-terminus: Octanoyltransferase (234 aa).

Positions 43–231 (IPTRNYFLFV…HFQELFQAEL (189 aa)) constitute a BPL/LPL catalytic domain. Substrate contacts are provided by residues 88-95 (RGGDITYH), 160-162 (AMG), and 173-175 (GFA). Cysteine 191 (acyl-thioester intermediate) is an active-site residue.

This sequence belongs to the LipB family.

It localises to the cytoplasm. It catalyses the reaction octanoyl-[ACP] + L-lysyl-[protein] = N(6)-octanoyl-L-lysyl-[protein] + holo-[ACP] + H(+). Its pathway is protein modification; protein lipoylation via endogenous pathway; protein N(6)-(lipoyl)lysine from octanoyl-[acyl-carrier-protein]: step 1/2. In terms of biological role, catalyzes the transfer of endogenously produced octanoic acid from octanoyl-acyl-carrier-protein onto the lipoyl domains of lipoate-dependent enzymes. Lipoyl-ACP can also act as a substrate although octanoyl-ACP is likely to be the physiological substrate. The protein is Octanoyltransferase of Christiangramia forsetii (strain DSM 17595 / CGMCC 1.15422 / KT0803) (Gramella forsetii).